The primary structure comprises 367 residues: MDAYEYSELIKELENKIENIESILKPEKLEARLKEIEELENSPDFWNDPKTSAKVQKEKNAILRKLEKYKKAKTALQDNKDMFELASMEEDEETLNEVFNDVQDLKKIIRDLEIEVMLSDENDAKNAIISIHPGAGGTESHDWASILYRMYLRYAERRGWKVEVLDYQAGDEAGIKDVSFLVKGENAYGYLKAENGIHRLVRVSPFDSGGRRHTSFASVQVSPEIDDDIEIEIDPKDIRIDVFRASGAGGQHVNKTESAVRITHIPTGIVVGCQTDRSQHKNKDMAMKMLKSKLYELELEKRKAEEEGKPKDEMGWGHQIRSYVLFPYQQVKDNRSNKAYSRVDDILDGDLDEVIEDVLIAEKEHEN.

At glutamine 251 the chain carries N5-methylglutamine.

It belongs to the prokaryotic/mitochondrial release factor family. In terms of processing, methylated by PrmC. Methylation increases the termination efficiency of RF2.

Its subcellular location is the cytoplasm. Its function is as follows. Peptide chain release factor 2 directs the termination of translation in response to the peptide chain termination codons UGA and UAA. In Nautilia profundicola (strain ATCC BAA-1463 / DSM 18972 / AmH), this protein is Peptide chain release factor 2.